The sequence spans 185 residues: Riboflavin kinase (185 aa).

2 residues coordinate Mg(2+): T41 and N43. E122 functions as the Nucleophile in the catalytic mechanism.

This sequence belongs to the flavokinase family. Zn(2+) is required as a cofactor. Requires Mg(2+) as cofactor.

The catalysed reaction is riboflavin + ATP = FMN + ADP + H(+). It functions in the pathway cofactor biosynthesis; FMN biosynthesis; FMN from riboflavin (ATP route): step 1/1. Functionally, catalyzes the phosphorylation of riboflavin (vitamin B2) to form flavin mononucleotide (FMN) coenzyme. This is Riboflavin kinase (FMN1) from Kluyveromyces lactis (strain ATCC 8585 / CBS 2359 / DSM 70799 / NBRC 1267 / NRRL Y-1140 / WM37) (Yeast).